The sequence spans 395 residues: Alanine racemase 2 (395 aa).

Residue Lys-60 is the Proton acceptor; specific for D-alanine of the active site. Lys-60 bears the N6-(pyridoxal phosphate)lysine mark. Arg-158 is a substrate binding site. Catalysis depends on Tyr-288, which acts as the Proton acceptor; specific for L-alanine. Met-332 contributes to the substrate binding site.

Belongs to the alanine racemase family. Pyridoxal 5'-phosphate serves as cofactor.

The enzyme catalyses L-alanine = D-alanine. The protein operates within amino-acid biosynthesis; D-alanine biosynthesis; D-alanine from L-alanine: step 1/1. Catalyzes the interconversion of L-alanine and D-alanine. May also act on other amino acids. This Clostridium acetobutylicum (strain ATCC 824 / DSM 792 / JCM 1419 / IAM 19013 / LMG 5710 / NBRC 13948 / NRRL B-527 / VKM B-1787 / 2291 / W) protein is Alanine racemase 2 (alr2).